Consider the following 168-residue polypeptide: MSTSDASIIKPIQWCAIEPPNLPAAIADWLMELGSMTRRFELHCQQVHVEPQRECFISRDELGEEAEHLPISERYWLREIVLCGDNQPWLLGRTVIPEGTLSGPDRALVDLGTLPLGRYLFGGNNLTRDYIQVGRQDELWARRSLLRLSGKPLLLTEVFLPASPLYSI.

Substrate contacts are provided by M36, R78, L116, and E157.

Belongs to the UbiC family. In terms of assembly, monomer.

The protein resides in the cytoplasm. It carries out the reaction chorismate = 4-hydroxybenzoate + pyruvate. The protein operates within cofactor biosynthesis; ubiquinone biosynthesis. Its function is as follows. Removes the pyruvyl group from chorismate, with concomitant aromatization of the ring, to provide 4-hydroxybenzoate (4HB) for the ubiquinone pathway. This Yersinia enterocolitica serotype O:8 / biotype 1B (strain NCTC 13174 / 8081) protein is Chorismate pyruvate-lyase.